A 736-amino-acid chain; its full sequence is Catalase-peroxidase (736 aa).

Positions 100–223 (WHSAGTYRIG…LAAVQMGLIY (124 aa)) form a cross-link, tryptophyl-tyrosyl-methioninium (Trp-Tyr) (with M-249). H101 acts as the Proton acceptor in catalysis. The segment at residues 223-249 (YVNPEGPDGKPDPVAAARDIRETFRRM) is a cross-link (tryptophyl-tyrosyl-methioninium (Tyr-Met) (with W-100)). H264 contributes to the heme b binding site.

The protein belongs to the peroxidase family. Peroxidase/catalase subfamily. As to quaternary structure, homodimer or homotetramer. Requires heme b as cofactor. Formation of the three residue Trp-Tyr-Met cross-link is important for the catalase, but not the peroxidase activity of the enzyme.

The catalysed reaction is H2O2 + AH2 = A + 2 H2O. The enzyme catalyses 2 H2O2 = O2 + 2 H2O. Functionally, bifunctional enzyme with both catalase and broad-spectrum peroxidase activity. This chain is Catalase-peroxidase, found in Geobacillus kaustophilus (strain HTA426).